The chain runs to 467 residues: Chromosomal replication initiator protein DnaA (467 aa).

The interval 1–80 (MTSELWHQCL…APRISLKIGS (80 aa)) is domain I, interacts with DnaA modulators. The domain II stretch occupies residues 80–130 (SITGNSKGQQASKDSAVGATRTTAPSRPVIADVAPSGERNVTVEGAIKHES). The domain III, AAA+ region stretch occupies residues 131–347 (YLNPTFTFET…GALKLVIANA (217 aa)). Residues Gly-175, Gly-177, Lys-178, and Thr-179 each contribute to the ATP site. Residues 348-467 (HFTGQEITPA…YQNFMRMLTS (120 aa)) are domain IV, binds dsDNA.

The protein belongs to the DnaA family. Oligomerizes as a right-handed, spiral filament on DNA at oriC.

It is found in the cytoplasm. In terms of biological role, plays an essential role in the initiation and regulation of chromosomal replication. ATP-DnaA binds to the origin of replication (oriC) to initiate formation of the DNA replication initiation complex once per cell cycle. Binds the DnaA box (a 9 base pair repeat at the origin) and separates the double-stranded (ds)DNA. Forms a right-handed helical filament on oriC DNA; dsDNA binds to the exterior of the filament while single-stranded (ss)DNA is stabiized in the filament's interior. The ATP-DnaA-oriC complex binds and stabilizes one strand of the AT-rich DNA unwinding element (DUE), permitting loading of DNA polymerase. After initiation quickly degrades to an ADP-DnaA complex that is not apt for DNA replication. Binds acidic phospholipids. This Hahella chejuensis (strain KCTC 2396) protein is Chromosomal replication initiator protein DnaA.